The sequence spans 361 residues: Histidinol-phosphate aminotransferase (361 aa).

An N6-(pyridoxal phosphate)lysine modification is found at lysine 219.

This sequence belongs to the class-II pyridoxal-phosphate-dependent aminotransferase family. Histidinol-phosphate aminotransferase subfamily. In terms of assembly, homodimer. The cofactor is pyridoxal 5'-phosphate.

It carries out the reaction L-histidinol phosphate + 2-oxoglutarate = 3-(imidazol-4-yl)-2-oxopropyl phosphate + L-glutamate. The protein operates within amino-acid biosynthesis; L-histidine biosynthesis; L-histidine from 5-phospho-alpha-D-ribose 1-diphosphate: step 7/9. This chain is Histidinol-phosphate aminotransferase, found in Cereibacter sphaeroides (strain KD131 / KCTC 12085) (Rhodobacter sphaeroides).